Here is an 860-residue protein sequence, read N- to C-terminus: Leucine--tRNA ligase (860 aa).

The 'HIGH' region motif lies at 42 to 52 (PYPSGRLHMGH). The 'KMSKS' region signature appears at 619–623 (KMSKS). ATP is bound at residue Lys622.

The protein belongs to the class-I aminoacyl-tRNA synthetase family.

Its subcellular location is the cytoplasm. The enzyme catalyses tRNA(Leu) + L-leucine + ATP = L-leucyl-tRNA(Leu) + AMP + diphosphate. This Salmonella typhi protein is Leucine--tRNA ligase.